A 507-amino-acid chain; its full sequence is ATP synthase subunit alpha (507 aa).

170 to 177 (GDRQTGKT) serves as a coordination point for ATP.

It belongs to the ATPase alpha/beta chains family. F-type ATPases have 2 components, CF(1) - the catalytic core - and CF(0) - the membrane proton channel. CF(1) has five subunits: alpha(3), beta(3), gamma(1), delta(1), epsilon(1). CF(0) has three main subunits: a(1), b(2) and c(9-12). The alpha and beta chains form an alternating ring which encloses part of the gamma chain. CF(1) is attached to CF(0) by a central stalk formed by the gamma and epsilon chains, while a peripheral stalk is formed by the delta and b chains.

It is found in the cell inner membrane. The enzyme catalyses ATP + H2O + 4 H(+)(in) = ADP + phosphate + 5 H(+)(out). Functionally, produces ATP from ADP in the presence of a proton gradient across the membrane. The alpha chain is a regulatory subunit. The protein is ATP synthase subunit alpha of Thermosipho africanus (strain TCF52B).